A 124-amino-acid chain; its full sequence is Large ribosomal subunit protein bL19 (124 aa).

It belongs to the bacterial ribosomal protein bL19 family.

In terms of biological role, this protein is located at the 30S-50S ribosomal subunit interface and may play a role in the structure and function of the aminoacyl-tRNA binding site. The protein is Large ribosomal subunit protein bL19 of Zymomonas mobilis subsp. mobilis (strain ATCC 31821 / ZM4 / CP4).